A 220-amino-acid chain; its full sequence is Splicing factor U2AF 26 kDa subunit (220 aa).

The residue at position 2 (A2) is an N-acetylalanine. The segment at 12–40 (EKDKVNCSFYFKIGACRHGDRCSRLHNKP) adopts a C3H1-type 1 zinc-finger fold. Positions 65–147 (SHCHVSDVEV…QAVHAELSPV (83 aa)) constitute an RRM domain. The segment at 149 to 176 (DFRESCCRQYEMGECTRGGFCNFMHLRP) adopts a C3H1-type 2 zinc-finger fold. The segment at 186–220 (YGRGPRRRSPPRSHTGHRPRERNRRRSPDHRHGRF) is disordered. The span at 189–220 (GPRRRSPPRSHTGHRPRERNRRRSPDHRHGRF) shows a compositional bias: basic residues.

This sequence belongs to the splicing factor SR family. Interacts with GFI1, U2AF2 and C1QBP.

The protein localises to the nucleus. It localises to the nucleus speckle. It is found in the cytoplasm. In terms of biological role, RNA-binding protein that function as a pre-mRNA splicing factor. Plays a critical role in both constitutive and enhancer-dependent splicing by mediating protein-protein interactions and protein-RNA interactions required for accurate 3'-splice site selection. Acts by enhancing the binding of U2AF2 to weak pyrimidine tracts. Also participates in the regulation of alternative pre-mRNA splicing. Activates exon 5 skipping of PTPRC during T-cell activation; an event reversed by GFI1. Binds to RNA at the AG dinucleotide at the 3'-splice site. Shows a preference for AGC or AGA. The sequence is that of Splicing factor U2AF 26 kDa subunit (U2AF1L4) from Bos taurus (Bovine).